We begin with the raw amino-acid sequence, 123 residues long: MLEILLVFLGGGLGSIARYLMGQLMTIHFPNILSLGTFTVNIIGSFIIGLVISLINKNQWNPQIGLLLATGFCGGFTTFSSFSYENTAYLKNNDYLLSFGYTIMSLFWGFAATFLGIYLVKRG.

Helical transmembrane passes span 1–21 (MLEILLVFLGGGLGSIARYLM), 32–52 (ILSLGTFTVNIIGSFIIGLVI), 64–84 (IGLLLATGFCGGFTTFSSFSY), and 99–119 (FGYTIMSLFWGFAATFLGIYL). Residues glycine 74 and threonine 77 each coordinate Na(+).

The protein belongs to the fluoride channel Fluc/FEX (TC 1.A.43) family.

The protein resides in the cell inner membrane. It carries out the reaction fluoride(in) = fluoride(out). Na(+) is not transported, but it plays an essential structural role and its presence is essential for fluoride channel function. In terms of biological role, fluoride-specific ion channel. Important for reducing fluoride concentration in the cell, thus reducing its toxicity. The protein is Fluoride-specific ion channel FluC of Gloeothece citriformis (strain PCC 7424) (Cyanothece sp. (strain PCC 7424)).